The following is a 63-amino-acid chain: Conotoxin Pn-B01411 (63 aa).

A signal peptide spans 1–22 (MRCFPVFIILLLLMASAPSFDA). A propeptide spanning residues 23 to 49 (RPKTEDDVPLSSFRDNLKRTLRTLLDP) is cleaved from the precursor. Ile62 bears the Isoleucine amide mark.

Belongs to the conotoxin T superfamily. Contains 2 disulfide bonds that can be either 'C1-C3, C2-C4' or 'C1-C4, C2-C3', since these disulfide connectivities have been observed for conotoxins with cysteine framework V (for examples, see AC P0DQQ7 and AC P81755). As to expression, expressed by the venom duct.

The protein resides in the secreted. This Conus pennaceus (Feathered cone) protein is Conotoxin Pn-B01411.